We begin with the raw amino-acid sequence, 212 residues long: MSQSTIHKIAVKKRTETGKNENNRLRSSGMIPVNIIGAGVATSGAVNEKELAKMVHSGIRQSTLIELDVEGQGQQKVFVKEIQRFPEIDRIRHVDFYKVVPGQKIVTKIGIETTGVAKGSKTGGQFEHIIHEIRVKTIPEDLLENLTIDVTDLDVGDSIKISQLKVPASWEILINGDPIVTSVNKTKALLAAERAEAKGAAPDDAKAKKGKK.

A disordered region spans residues 1 to 25 (MSQSTIHKIAVKKRTETGKNENNRL). Residues 13–24 (KRTETGKNENNR) are compositionally biased toward basic and acidic residues.

This sequence belongs to the bacterial ribosomal protein bL25 family. CTC subfamily. As to quaternary structure, part of the 50S ribosomal subunit; part of the 5S rRNA/L5/L18/L25 subcomplex. Contacts the 5S rRNA. Binds to the 5S rRNA independently of L5 and L18.

Its function is as follows. This is one of the proteins that binds to the 5S RNA in the ribosome where it forms part of the central protuberance. This chain is Large ribosomal subunit protein bL25, found in Leptospira borgpetersenii serovar Hardjo-bovis (strain JB197).